A 373-amino-acid polypeptide reads, in one-letter code: Probable quinol oxidase subunit 2 (373 aa).

An N-terminal signal peptide occupies residues 1–19; it reads MSKFKSLLLLFGSLILLSG. Cysteine 20 carries the N-palmitoyl cysteine lipid modification. Residue cysteine 20 is the site of S-diacylglycerol cysteine attachment. Helical transmembrane passes span 38 to 58 and 82 to 102; these read FLIM…LILF and LETI…IPTV. 2 stretches are compositionally biased toward basic and acidic residues: residues 292 to 320 and 339 to 373; these read EERT…ERHG and EESH…GGGH. Residues 292–373 are disordered; it reads EERTADVLDK…KKDHENGGGH (82 aa).

This sequence belongs to the cytochrome c oxidase subunit 2 family.

It localises to the cell membrane. It carries out the reaction 2 a quinol + O2 = 2 a quinone + 2 H2O. Its function is as follows. Catalyzes quinol oxidation with the concomitant reduction of oxygen to water. Subunit II transfers the electrons from a quinol to the binuclear center of the catalytic subunit I. This is Probable quinol oxidase subunit 2 (qoxA) from Staphylococcus saprophyticus subsp. saprophyticus (strain ATCC 15305 / DSM 20229 / NCIMB 8711 / NCTC 7292 / S-41).